Consider the following 449-residue polypeptide: Naphthalene 1,2-dioxygenase system, large oxygenase component (449 aa).

The Rieske domain occupies 39–137 (WLFLTHDSLI…LNKKCLGLKE (99 aa)). [2Fe-2S] cluster is bound by residues Cys81, His83, Cys101, and His104. Fe cation is bound by residues His208, His213, and Asp362.

It belongs to the bacterial ring-hydroxylating dioxygenase alpha subunit family. As to quaternary structure, the naphthalene dioxygenase (NDO) multicomponent enzyme system is composed of an electron transfer component and a dioxygenase component (iron sulfur protein (ISP)). The electron transfer component is composed of a ferredoxin reductase (NdoR) and a ferredoxin (NdoA), and the dioxygenase component is formed of a heterohexamer (trimer of heterodimers) of three large alpha subunits (NdoB) and three small beta subunits (NdoC). Requires [2Fe-2S] cluster as cofactor. The cofactor is Fe(2+).

It catalyses the reaction naphthalene + NADH + O2 + H(+) = (1R,2S)-1,2-dihydronaphthalene-1,2-diol + NAD(+). Its pathway is aromatic compound metabolism; naphthalene degradation. Component of the naphthalene dioxygenase (NDO) multicomponent enzyme system which catalyzes the incorporation of both atoms of molecular oxygen into naphthalene to form cis-(1R,2S)-dihydroxy-1,2-dihydronaphthalene. The alpha subunit has a catalytic role in the holoenzyme. Also able to catalyze the cis-dihydroxylation of biphenyl and phenanthrene. The sequence is that of Naphthalene 1,2-dioxygenase system, large oxygenase component from Pseudomonas putida (Arthrobacter siderocapsulatus).